Here is a 485-residue protein sequence, read N- to C-terminus: L-ornithine N(5)-oxygenase (485 aa).

FAD contacts are provided by residues 49 to 57 and Gln-68; that span reads ERQQQFVWH. Lys-73 provides a ligand contact to L-ornithine. An FAD-binding site is contributed by Val-134. Arg-243 serves as a coordination point for NADP(+). Residues 257–260 and Asn-287 contribute to the L-ornithine site; that span reads NEIF. 287-289 lines the NADP(+) pocket; that stretch reads NYS. Position 425–427 (425–427) interacts with FAD; that stretch reads TLL. Ser-428 is a binding site for L-ornithine.

This sequence belongs to the lysine N(6)-hydroxylase/L-ornithine N(5)-oxygenase family. In terms of assembly, homotetramer. FAD is required as a cofactor.

It carries out the reaction L-ornithine + NADH + O2 = N(5)-hydroxy-L-ornithine + NAD(+) + H2O. The catalysed reaction is L-ornithine + NADPH + O2 = N(5)-hydroxy-L-ornithine + NADP(+) + H2O. Its pathway is siderophore biosynthesis. Functionally, L-ornithine N(5)-oxygenase; part of the gene cluster that mediates the biosynthesis of desferriferrichrome that chelates Fe(3+) to form ferrichrome. Fe(3+) is a key factor for induction of trap formation and the fungus uses the iron chelating desferriferrichrome to sequester Fe(3+) to inhibit trap formation and increase nematicidal activity. The biosynthesis of desferriferrichrome requires the action of the L-ornithine N(5)-oxygenase (LOO) Ao414 that hydroxylates L-ornithine at N(5), resulting in the formation of N(5)-hydroxyl-L-ornithine, which is subsequently N-acetylated to yield N(5)-acetyl-N(5)-hydroxy-L-ornithine (L-AHO). L-AHO harbors one hydroxamate moiety, which is the key core responsible for chelating iron. Then, L-AHO is further condensated with glycines to form desferriferrichrome through the NRPS protein Ao415. This Arthrobotrys oligospora (strain ATCC 24927 / CBS 115.81 / DSM 1491) (Nematode-trapping fungus) protein is L-ornithine N(5)-oxygenase.